A 127-amino-acid polypeptide reads, in one-letter code: Protein B20 (127 aa).

The disordered stretch occupies residues 86-127 (DRTGMNSESDSESDNISIKTEYENEYEFYDETQDQSTQHNDL). Positions 108-118 (ENEYEFYDETQ) are enriched in acidic residues.

This is Protein B20 from Homo sapiens (Human).